Consider the following 102-residue polypeptide: uncharacterized protein (102 aa).

This is an uncharacterized protein from Schizosaccharomyces pombe (strain 972 / ATCC 24843) (Fission yeast).